The following is a 404-amino-acid chain: Cysteine desulfurase IscS (404 aa).

Residues 85 to 86, N165, Q193, 213 to 215, and T251 contribute to the pyridoxal 5'-phosphate site; these read GT and SGH. C338 functions as the Cysteine persulfide intermediate in the catalytic mechanism. C338 is a [2Fe-2S] cluster binding site.

This sequence belongs to the class-V pyridoxal-phosphate-dependent aminotransferase family. NifS/IscS subfamily. In terms of assembly, homodimer. Forms a heterotetramer with IscU, interacts with other sulfur acceptors. The cofactor is pyridoxal 5'-phosphate.

It is found in the cytoplasm. It carries out the reaction (sulfur carrier)-H + L-cysteine = (sulfur carrier)-SH + L-alanine. Its pathway is cofactor biosynthesis; iron-sulfur cluster biosynthesis. Functionally, master enzyme that delivers sulfur to a number of partners involved in Fe-S cluster assembly, tRNA modification or cofactor biosynthesis. Catalyzes the removal of elemental sulfur atoms from cysteine to produce alanine. Functions as a sulfur delivery protein for Fe-S cluster synthesis onto IscU, an Fe-S scaffold assembly protein, as well as other S acceptor proteins. This chain is Cysteine desulfurase IscS, found in Methanosarcina thermophila.